The following is a 1165-amino-acid chain: Tectonin beta-propeller repeat-containing protein 1 (1165 aa).

TECPR repeat units lie at residues 209–240 (LSVW…SLLD), 254–285 (DLLW…SIVE), 301–332 (SVVW…IEMV), and 344–376 (DQVW…KAII). Phosphoserine is present on residues serine 386, serine 388, serine 391, serine 412, and serine 417. The disordered stretch occupies residues 404–486 (RGSGESAPSD…GPAPTPAELP (83 aa)). A PH domain is found at 611 to 717 (KTGALQWWCD…WLALLSLSCC (107 aa)). A TECPR 5 repeat occupies 729-756 (QAIWSITCKGDIFVSEPSPDLEAHEHPL). 2 positions are modified to phosphoserine: serine 938 and serine 949. TECPR repeat units lie at residues 953 to 984 (IALW…LHVG), 998 to 1029 (YQVW…YHIP), 1044 to 1075 (TSVY…EHVS), and 1087 to 1127 (DQVW…DYGI). Residues 1140-1165 (ATRAPRSSSQEQEPSAPPEAHGPVCC) are disordered. Low complexity predominate over residues 1143 to 1153 (APRSSSQEQEP).

Belongs to the TECPR1 family. As to quaternary structure, interacts with ATG5; the interaction is direct. Interacts with WIPI2. Interacts with the ATG5-ATG12 conjugate, the interaction is however mutually exclusive with ATG16, since it does not interact with ATG12-ATG5-ATG16 complex.

It is found in the cytoplasmic vesicle. The protein resides in the autophagosome membrane. Its subcellular location is the lysosome membrane. In terms of biological role, tethering factor involved in autophagy. Involved in autophagosome maturation by promoting the autophagosome fusion with lysosomes: acts by associating with both the ATG5-ATG12 conjugate and phosphatidylinositol-3-phosphate (PtdIns(3)P) present at the surface of autophagosomes. Also involved in selective autophagy against bacterial pathogens, by being required for phagophore/preautophagosomal structure biogenesis and maturation. This is Tectonin beta-propeller repeat-containing protein 1 (TECPR1) from Homo sapiens (Human).